A 96-amino-acid polypeptide reads, in one-letter code: Co-chaperonin GroES (96 aa).

This sequence belongs to the GroES chaperonin family. Heptamer of 7 subunits arranged in a ring. Interacts with the chaperonin GroEL.

The protein resides in the cytoplasm. Its function is as follows. Together with the chaperonin GroEL, plays an essential role in assisting protein folding. The GroEL-GroES system forms a nano-cage that allows encapsulation of the non-native substrate proteins and provides a physical environment optimized to promote and accelerate protein folding. GroES binds to the apical surface of the GroEL ring, thereby capping the opening of the GroEL channel. The polypeptide is Co-chaperonin GroES (Solidesulfovibrio magneticus (strain ATCC 700980 / DSM 13731 / RS-1) (Desulfovibrio magneticus)).